The primary structure comprises 316 residues: DNA-directed RNA polymerase subunit alpha (316 aa).

The tract at residues 1–229 (MLEMEKPRID…EYLKLFTEID (229 aa)) is alpha N-terminal domain (alpha-NTD). The alpha C-terminal domain (alpha-CTD) stretch occupies residues 246–316 (KDKILEMSIE…LNLSFRKSED (71 aa)).

It belongs to the RNA polymerase alpha chain family. Homodimer. The RNAP catalytic core consists of 2 alpha, 1 beta, 1 beta' and 1 omega subunit. When a sigma factor is associated with the core the holoenzyme is formed, which can initiate transcription.

The catalysed reaction is RNA(n) + a ribonucleoside 5'-triphosphate = RNA(n+1) + diphosphate. Its function is as follows. DNA-dependent RNA polymerase catalyzes the transcription of DNA into RNA using the four ribonucleoside triphosphates as substrates. In Syntrophomonas wolfei subsp. wolfei (strain DSM 2245B / Goettingen), this protein is DNA-directed RNA polymerase subunit alpha.